Reading from the N-terminus, the 109-residue chain is MAVCIAVIAKENYPLYIRSTPTENKLKFHYMVHTSLDVVDEKISAMGKALVDQRELYLGLLYPTEDYKMFRKLHNSYTDVMCNPFYNPGDRIQSRAFDNMVTSMMIQVC.

This sequence belongs to the TRAPP small subunits family. Sedlin subfamily. As to quaternary structure, component of the multisubunit TRAPP (transport protein particle) complex, which includes at least TRAPPC2, TRAPPC2L, TRAPPC3, TRAPPC3L, TRAPPC4, TRAPPC5, TRAPPC8, TRAPPC9, TRAPPC10, TRAPPC11 and TRAPPC12. Interacts with the heterodimer TRAPPC3-TRAPPC6A.

The protein localises to the cytoplasm. The protein resides in the perinuclear region. It localises to the endoplasmic reticulum. It is found in the golgi apparatus. May play a role in vesicular transport from endoplasmic reticulum to Golgi. The sequence is that of Trafficking protein particle complex subunit 2-like protein (TRAPPC2L) from Pongo abelii (Sumatran orangutan).